The primary structure comprises 147 residues: Large ribosomal subunit protein bL9 (147 aa).

This sequence belongs to the bacterial ribosomal protein bL9 family.

Functionally, binds to the 23S rRNA. This is Large ribosomal subunit protein bL9 from Bacteroides fragilis (strain ATCC 25285 / DSM 2151 / CCUG 4856 / JCM 11019 / LMG 10263 / NCTC 9343 / Onslow / VPI 2553 / EN-2).